The following is a 96-amino-acid chain: Pyrimidine/purine nucleoside phosphorylase (96 aa).

It belongs to the nucleoside phosphorylase PpnP family.

The enzyme catalyses a purine D-ribonucleoside + phosphate = a purine nucleobase + alpha-D-ribose 1-phosphate. It catalyses the reaction adenosine + phosphate = alpha-D-ribose 1-phosphate + adenine. The catalysed reaction is cytidine + phosphate = cytosine + alpha-D-ribose 1-phosphate. It carries out the reaction guanosine + phosphate = alpha-D-ribose 1-phosphate + guanine. The enzyme catalyses inosine + phosphate = alpha-D-ribose 1-phosphate + hypoxanthine. It catalyses the reaction thymidine + phosphate = 2-deoxy-alpha-D-ribose 1-phosphate + thymine. The catalysed reaction is uridine + phosphate = alpha-D-ribose 1-phosphate + uracil. It carries out the reaction xanthosine + phosphate = alpha-D-ribose 1-phosphate + xanthine. Catalyzes the phosphorolysis of diverse nucleosides, yielding D-ribose 1-phosphate and the respective free bases. Can use uridine, adenosine, guanosine, cytidine, thymidine, inosine and xanthosine as substrates. Also catalyzes the reverse reactions. This chain is Pyrimidine/purine nucleoside phosphorylase, found in Erwinia tasmaniensis (strain DSM 17950 / CFBP 7177 / CIP 109463 / NCPPB 4357 / Et1/99).